The chain runs to 152 residues: Small ribosomal subunit protein uS13 (152 aa).

This sequence belongs to the universal ribosomal protein uS13 family. As to quaternary structure, component of the small ribosomal subunit.

The protein resides in the cytoplasm. Its function is as follows. Component of the small ribosomal subunit. The ribosome is a large ribonucleoprotein complex responsible for the synthesis of proteins in the cell. The chain is Small ribosomal subunit protein uS13 (rps18) from Ictalurus punctatus (Channel catfish).